Here is a 517-residue protein sequence, read N- to C-terminus: Mitochondrial division protein fszA (517 aa).

Residues 60–64, 147–149, Glu-178, Arg-182, and Asp-225 each bind GTP; these read GGGCN and GTG. The disordered stretch occupies residues 496–517; it reads FTNGNNNKPYNNNKNTPGSNYE. The segment covering 497 to 517 has biased composition (low complexity); sequence TNGNNNKPYNNNKNTPGSNYE.

It belongs to the FtsZ family.

The protein localises to the mitochondrion matrix. Its function is as follows. Probably involved in mitochondrion division process. When overexpressed, induces mitochondrial tubule formation. Binds to and hydrolyzes GTP. The chain is Mitochondrial division protein fszA (fszA) from Dictyostelium discoideum (Social amoeba).